Consider the following 195-residue polypeptide: NADH-quinone oxidoreductase subunit I (195 aa).

4Fe-4S ferredoxin-type domains lie at 44–74 (LNRYADGLEKCIGCELCAWACPADAIYVEGA) and 90–119 (QVYQINYLRCIGCGLCVEACPTRALTMTNE). Cys-54, Cys-57, Cys-60, Cys-64, Cys-99, Cys-102, Cys-105, and Cys-109 together coordinate [4Fe-4S] cluster. The tract at residues 145–195 (MTAPPHALRPGTTQDDYYRGDITAVPEQAAPEQAAPEQPAPEREPNPETEK) is disordered. A compositionally biased stretch (low complexity) spans 168 to 181 (AVPEQAAPEQAAPE). Over residues 184–195 (APEREPNPETEK) the composition is skewed to basic and acidic residues.

It belongs to the complex I 23 kDa subunit family. As to quaternary structure, NDH-1 is composed of 14 different subunits. Subunits NuoA, H, J, K, L, M, N constitute the membrane sector of the complex. It depends on [4Fe-4S] cluster as a cofactor.

Its subcellular location is the cell membrane. The enzyme catalyses a quinone + NADH + 5 H(+)(in) = a quinol + NAD(+) + 4 H(+)(out). NDH-1 shuttles electrons from NADH, via FMN and iron-sulfur (Fe-S) centers, to quinones in the respiratory chain. The immediate electron acceptor for the enzyme in this species is believed to be ubiquinone. Couples the redox reaction to proton translocation (for every two electrons transferred, four hydrogen ions are translocated across the cytoplasmic membrane), and thus conserves the redox energy in a proton gradient. This chain is NADH-quinone oxidoreductase subunit I, found in Rhodococcus erythropolis (strain PR4 / NBRC 100887).